A 252-amino-acid chain; its full sequence is Chitooligosaccharide deacetylase (252 aa).

Residues His-61 and His-125 each contribute to the Mg(2+) site.

Belongs to the YdjC deacetylase family. ChbG subfamily. In terms of assembly, homodimer. The cofactor is Mg(2+).

The protein resides in the cytoplasm. It carries out the reaction N,N'-diacetylchitobiose + H2O = N-acetyl-beta-D-glucosaminyl-(1-&gt;4)-D-glucosamine + acetate. It catalyses the reaction diacetylchitobiose-6'-phosphate + H2O = N'-monoacetylchitobiose-6'-phosphate + acetate. It participates in glycan degradation; chitin degradation. In terms of biological role, involved in the degradation of chitin. ChbG is essential for growth on the acetylated chitooligosaccharides chitobiose and chitotriose but is dispensable for growth on cellobiose and chitosan dimer, the deacetylated form of chitobiose. Deacetylation of chitobiose-6-P and chitotriose-6-P is necessary for both the activation of the chb promoter by the regulatory protein ChbR and the hydrolysis of phosphorylated beta-glucosides by the phospho-beta-glucosidase ChbF. Catalyzes the removal of only one acetyl group from chitobiose-6-P to yield monoacetylchitobiose-6-P, the inducer of ChbR and the substrate of ChbF. This is Chitooligosaccharide deacetylase from Escherichia coli O8 (strain IAI1).